We begin with the raw amino-acid sequence, 125 residues long: Protein 5 (125 aa).

The polypeptide is Protein 5 (5) (Hordeum vulgare (Barley)).